We begin with the raw amino-acid sequence, 342 residues long: NAD kinase (342 aa).

The Proton acceptor role is filled by Asp66. NAD(+) is bound by residues 66–67, Arg71, 141–142, Lys152, Asp171, 182–187, and Ala206; these read DG, ND, and TAYAFS.

This sequence belongs to the NAD kinase family. The cofactor is a divalent metal cation.

The protein resides in the cytoplasm. The catalysed reaction is NAD(+) + ATP = ADP + NADP(+) + H(+). Involved in the regulation of the intracellular balance of NAD and NADP, and is a key enzyme in the biosynthesis of NADP. Catalyzes specifically the phosphorylation on 2'-hydroxyl of the adenosine moiety of NAD to yield NADP. This chain is NAD kinase, found in Bifidobacterium longum (strain NCC 2705).